Here is a 360-residue protein sequence, read N- to C-terminus: MTVPPTATHQPWPGVIAAYRDRLPVGDDWTPVTLLEGGTPLIAATNLSKQTGCTIHLKVEGLNPTGSFKDRGMTMAVTDALAHGQRAVLCASTGNTSASAAAYAARAGITCAVLIPQGKIAMGKLAQAVMHGAKIIQIDGNFDDCLELARKMAADFPTISLVNSVNPVRIEGQKTAAFEIVDVLGTAPDVHALPVGNAGNITAYWKGYTEYHQLGLIDKLPRMLGTQAAGAAPLVLGEPVSHPETIATAIRIGSPASWTSAVEAQQQSKGRFLAASDEEILAAYHLVARVEGVFVEPASAASIAGLLKAIDDGWVARGSTVVCTVTGNGLKDPDTALKDMPSVSPVPVDPVAVVEKLGLA.

An N6-(pyridoxal phosphate)lysine modification is found at Lys69. Pyridoxal 5'-phosphate is bound by residues Asn95, 196–200 (GNAGN), and Thr326.

This sequence belongs to the threonine synthase family. As to quaternary structure, homodimer. Requires pyridoxal 5'-phosphate as cofactor.

The catalysed reaction is O-phospho-L-homoserine + H2O = L-threonine + phosphate. The protein operates within amino-acid biosynthesis; L-threonine biosynthesis; L-threonine from L-aspartate: step 5/5. Functionally, catalyzes the gamma-elimination of phosphate from L-phosphohomoserine and the beta-addition of water to produce L-threonine. In Mycobacterium bovis (strain ATCC BAA-935 / AF2122/97), this protein is Threonine synthase (thrC).